We begin with the raw amino-acid sequence, 402 residues long: Multidrug resistance protein MdtH (402 aa).

Helical transmembrane passes span 13 to 33 (YFLL…FPLI), 34 to 54 (SIRF…ALGL), 99 to 116 (PWVL…GTLF), 139 to 159 (LLMM…SWLL), 165 to 185 (LVCG…AWLL), 214 to 234 (VLTL…LPVM), 243 to 263 (AAVK…LYPL), 277 to 297 (LMAG…ASNL), 300 to 320 (LFTL…ARET), 340 to 360 (LGLA…FDAG), and 368 to 388 (LPWA…WWQF).

This sequence belongs to the major facilitator superfamily. DHA1 family. MdtH (TC 2.A.1.2.21) subfamily.

It localises to the cell inner membrane. The protein is Multidrug resistance protein MdtH of Cronobacter sakazakii (strain ATCC BAA-894) (Enterobacter sakazakii).